The sequence spans 273 residues: Undecaprenyl-diphosphatase (273 aa).

The next 7 helical transmembrane spans lie at 4–24 (LILLKALLLGIVEGLTEFLPI), 43–63 (KAKVFTVAIQLGAILAVCWEY), 82–102 (FVINLFIAFLPAAILGLLFIK), 108–128 (LFHPMPVAIALVTGGILILWA), 183–203 (AAEFSFFLAIPVMFAATFYDV), 217–237 (MFATGSVAAFISALIAIRGFI), and 248–268 (FAWYRIGFGLIVLLTAYSGLV).

Belongs to the UppP family.

Its subcellular location is the cell inner membrane. The enzyme catalyses di-trans,octa-cis-undecaprenyl diphosphate + H2O = di-trans,octa-cis-undecaprenyl phosphate + phosphate + H(+). Functionally, catalyzes the dephosphorylation of undecaprenyl diphosphate (UPP). Confers resistance to bacitracin. The protein is Undecaprenyl-diphosphatase of Nitrosomonas europaea (strain ATCC 19718 / CIP 103999 / KCTC 2705 / NBRC 14298).